We begin with the raw amino-acid sequence, 178 residues long: MTQLSSNDVPSMGRRQFMNLLTFGTATGVALGALYPVANYFMPLRAGGGGGGTSAKDELGNPITKTGWLATHQAGDRSLVQGLKGDPTYLIVNEVGEIGEFGLNAICTHLGCVVPWDSGANKFICPCHGSQYDTNGKVVRGPAPLSLALAHVDIEDDAVLVKQWSETDFRTNENPWWA.

A helical membrane pass occupies residues 20–42 (LLTFGTATGVALGALYPVANYFM). One can recognise a Rieske domain in the interval 65-161 (KTGWLATHQA…VDIEDDAVLV (97 aa)). Cysteine 107, histidine 109, cysteine 125, and histidine 128 together coordinate [2Fe-2S] cluster. A disulfide bridge connects residues cysteine 112 and cysteine 127.

Belongs to the Rieske iron-sulfur protein family. The 4 large subunits of the cytochrome b6-f complex are cytochrome b6, subunit IV (17 kDa polypeptide, PetD), cytochrome f and the Rieske protein, while the 4 small subunits are PetG, PetL, PetM and PetN. The complex functions as a dimer. Requires [2Fe-2S] cluster as cofactor.

It localises to the cellular thylakoid membrane. It carries out the reaction 2 oxidized [plastocyanin] + a plastoquinol + 2 H(+)(in) = 2 reduced [plastocyanin] + a plastoquinone + 4 H(+)(out). Functionally, component of the cytochrome b6-f complex, which mediates electron transfer between photosystem II (PSII) and photosystem I (PSI), cyclic electron flow around PSI, and state transitions. This chain is Cytochrome b6-f complex iron-sulfur subunit, found in Prochlorococcus marinus (strain MIT 9301).